The chain runs to 107 residues: Thiosulfate sulfurtransferase GlpE (107 aa).

The Rhodanese domain occupies 17–101 (AAGAARLVDI…GFEAWRREFP (85 aa)). The Cysteine persulfide intermediate role is filled by Cys-65.

This sequence belongs to the GlpE family.

The protein localises to the cytoplasm. It carries out the reaction thiosulfate + hydrogen cyanide = thiocyanate + sulfite + 2 H(+). It catalyses the reaction thiosulfate + [thioredoxin]-dithiol = [thioredoxin]-disulfide + hydrogen sulfide + sulfite + 2 H(+). Transferase that catalyzes the transfer of sulfur from thiosulfate to thiophilic acceptors such as cyanide or dithiols. May function in a CysM-independent thiosulfate assimilation pathway by catalyzing the conversion of thiosulfate to sulfite, which can then be used for L-cysteine biosynthesis. The chain is Thiosulfate sulfurtransferase GlpE from Aeromonas hydrophila subsp. hydrophila (strain ATCC 7966 / DSM 30187 / BCRC 13018 / CCUG 14551 / JCM 1027 / KCTC 2358 / NCIMB 9240 / NCTC 8049).